Reading from the N-terminus, the 657-residue chain is N-acetylgalactosaminyltransferase 7 (657 aa).

The Cytoplasmic segment spans residues 1 to 6 (MRLKIG). The helical; Signal-anchor for type II membrane protein transmembrane segment at 7-29 (FILRSLLVVGSFLGLVVLWSSLS) threads the bilayer. 2 disordered regions span residues 30–66 (SRPD…DDRF) and 83–105 (ESIR…DSQR). Residues 30–657 (SRPDDQSPLS…KWEMNNIHSV (628 aa)) lie on the Lumenal side of the membrane. Disulfide bonds link Cys-197–Cys-435, Cys-426–Cys-507, Cys-545–Cys-562, Cys-585–Cys-600, and Cys-625–Cys-640. The interval 206-317 (LLTSSVVIVF…VNWYAPLVAP (112 aa)) is catalytic subdomain A. Substrate-binding residues include Asp-247 and Arg-277. 2 residues coordinate Mn(2+): Asp-301 and His-303. A catalytic subdomain B region spans residues 381-443 (PYRSPAMAGG…PCSRVGHIYR (63 aa)). Trp-412 is a binding site for substrate. His-440 is a Mn(2+) binding site. Residue Arg-443 coordinates substrate. The Ricin B-type lectin domain maps to 532–652 (VEWGEIRGLE…SKMTQKWEMN (121 aa)).

This sequence belongs to the glycosyltransferase 2 family. GalNAc-T subfamily. It depends on Mn(2+) as a cofactor. In terms of tissue distribution, highly expressed in sublingual gland. Expressed at lower level in stomach, small intestiine and colon.

Its subcellular location is the golgi apparatus membrane. It carries out the reaction L-seryl-[protein] + UDP-N-acetyl-alpha-D-galactosamine = a 3-O-[N-acetyl-alpha-D-galactosaminyl]-L-seryl-[protein] + UDP + H(+). The enzyme catalyses L-threonyl-[protein] + UDP-N-acetyl-alpha-D-galactosamine = a 3-O-[N-acetyl-alpha-D-galactosaminyl]-L-threonyl-[protein] + UDP + H(+). It participates in protein modification; protein glycosylation. Its function is as follows. Glycopeptide transferase involved in O-linked oligosaccharide biosynthesis, which catalyzes the transfer of an N-acetyl-D-galactosamine residue to an already glycosylated peptide. In contrast to other proteins of the family, it does not act as a peptide transferase that transfers GalNAc onto serine or threonine residue on the protein receptor, but instead requires the prior addition of a GalNAc on a peptide before adding additional GalNAc moieties. Some peptide transferase activity is however not excluded, considering that its appropriate peptide substrate may remain unidentified. This is N-acetylgalactosaminyltransferase 7 (Galnt7) from Mus musculus (Mouse).